A 256-amino-acid chain; its full sequence is Short chain dehydrogenase adrF (256 aa).

6 residues coordinate NADP(+): Ile11, Asp57, Arg119, Tyr151, Lys155, and Val184. Tyr151 (proton acceptor) is an active-site residue. Lys155 (lowers pKa of active site Tyr) is an active-site residue.

This sequence belongs to the short-chain dehydrogenases/reductases (SDR) family.

Its pathway is secondary metabolite biosynthesis; terpenoid biosynthesis. Short chain dehydrogenase; part of the gene cluster that mediates the biosynthesis of andrastins, meroterpenoid compounds that exhibit inhibitory activity against ras farnesyltransferase, suggesting that they could be promising leads for antitumor agents. The first step of the pathway is the synthesis of 3,5-dimethylorsellinic acid (DMOA) by the polyketide synthase adrD via condensation of one acetyl-CoA starter unit with 3 malonyl-CoA units and 2 methylations. DMAO is then converted to farnesyl-DMAO by the prenyltransferase adrG. The methyltransferase adrK catalyzes the methylation of the carboxyl group of farnesyl-DMAO to farnesyl-DMAO methyl ester which is further converted to epoxyfarnesyl-DMAO methyl ester by the FAD-dependent monooxygenase adrH. The terpene cyclase adrI then catalyzes the carbon skeletal rearrangement to generate the andrastin E, the first compound in the pathway having the andrastin scaffold, with the tetracyclic ring system. The post-cyclization tailoring enzymes adrF, adrE, adrJ, and adrA, are involved in the conversion of andrastin E into andrastin A. The short chain dehydrogenase adrF is responsible for the oxidation of the C-3 a hydroxyl group of andrastin E to yield the corresponding ketone, andrastin D. The ketoreductase adrE stereoselectively reduces the carbonyl moiety to reverse the stereochemistry of the C-3 position to yield andrastin F. The acetyltransferase adrJ is the acetyltransferase that attaches the acetyl group to the C-3 hydroxyl group of andrastin F to yield andrastin C. Finally, the cytochrome P450 monooxygenase adrA catalyzes two sequential oxidation reactions of the C-23 methyl group, to generate the corresponding alcohol andrastin B, and aldehyde andrastin A. The polypeptide is Short chain dehydrogenase adrF (Penicillium roqueforti).